Reading from the N-terminus, the 296-residue chain is Elongation factor Ts (296 aa).

Residues T82–V85 are involved in Mg(2+) ion dislocation from EF-Tu.

The protein belongs to the EF-Ts family.

It is found in the cytoplasm. Functionally, associates with the EF-Tu.GDP complex and induces the exchange of GDP to GTP. It remains bound to the aminoacyl-tRNA.EF-Tu.GTP complex up to the GTP hydrolysis stage on the ribosome. This is Elongation factor Ts from Coxiella burnetii (strain CbuK_Q154) (Coxiella burnetii (strain Q154)).